Here is an 891-residue protein sequence, read N- to C-terminus: Alanine--tRNA ligase (891 aa).

Positions 564, 568, 678, and 682 each coordinate Zn(2+).

The protein belongs to the class-II aminoacyl-tRNA synthetase family. Zn(2+) serves as cofactor.

The protein localises to the cytoplasm. The enzyme catalyses tRNA(Ala) + L-alanine + ATP = L-alanyl-tRNA(Ala) + AMP + diphosphate. Catalyzes the attachment of alanine to tRNA(Ala) in a two-step reaction: alanine is first activated by ATP to form Ala-AMP and then transferred to the acceptor end of tRNA(Ala). Also edits incorrectly charged Ser-tRNA(Ala) and Gly-tRNA(Ala) via its editing domain. The sequence is that of Alanine--tRNA ligase from Nitrobacter hamburgensis (strain DSM 10229 / NCIMB 13809 / X14).